The chain runs to 1512 residues: ATP-dependent permease YOR1 (1512 aa).

Residues 1 to 68 are disordered; it reads MSPLLPTHWG…KGMKETEDGG (68 aa). Positions 13 to 29 are enriched in polar residues; that stretch reads APQNEPTLPSPSHSVST. The segment covering 31 to 65 has biased composition (basic and acidic residues); sequence VGDEEKLRRSEGSDGEDRINLDSNKYDVKGMKETE. The next 5 membrane-spanning stretches (helical) occupy residues 229–249, 288–308, 363–385, 475–495, and 507–527; these read ASLAMSLLDVFGWFFMSAGFI, GPGIGAAIGLLLLLICSSLGM, FAAGFSHMLWTAPVQMIVIIIIL, GMTAIAMSLPILAAILSFITY, and IFTVITLFNLMRMPLMMWPMT. An ABC transmembrane type-1 1 domain is found at 246 to 533; sequence AGFIKVFGDT…WPMTLSSTAD (288 aa). A disordered region spans residues 594–656; sequence VLNGGKPGGP…SAPGIDEEIS (63 aa). The segment covering 619–643 has biased composition (low complexity); it reads AEEIQAETAAGQPGAGEASAEGQGQ. An ABC transporter 1 domain is found at 651-871; sequence IDEEISEKKE…NGAFAKLIKE (221 aa). Residue 683–690 participates in ATP binding; sequence GAIGSGKS. Helical transmembrane passes span 937-957, 974-994, 1067-1087, and 1167-1187; these read GVFMLPLLFFCIVVAQSFYVI, NGFYMGIYAGLGVGLAIALFF, VILLAIIEPYFLIAMAVVSLL, and FLGSLLSFSVAIIVVCSSSVS. Residues 943-1217 enclose the ABC transmembrane type-1 2 domain; the sequence is LLFFCIVVAQ…LVRQIAEVEN (275 aa). The ABC transporter 2 domain occupies 1255–1496; sequence IEFKDVRMRY…GGIFTEMCSK (242 aa). An ATP-binding site is contributed by 1289-1296; sequence GRTGAGKS.

It belongs to the ABC transporter superfamily. ABCC family. Conjugate transporter (TC 3.A.1.208) subfamily.

It is found in the extracellular vesicle membrane. It localises to the secreted. Functionally, transmembrane transporter. May play a role in the packaging or formation of extracellular vesicles (EVs), and in the export of virulence factors from EVs. Required for efficient non-lytic exocytosis from host macrophages, the process by which the yeast escapes host macrophages with both host cell and pathogen remaining viable. This is ATP-dependent permease YOR1 from Cryptococcus neoformans var. grubii serotype A (strain H99 / ATCC 208821 / CBS 10515 / FGSC 9487) (Filobasidiella neoformans var. grubii).